Reading from the N-terminus, the 464-residue chain is Tryprostatin B synthase (464 aa).

2 residues coordinate brevianamide F: Met94 and Glu102. Dimethylallyl diphosphate-binding residues include Arg113, Lys201, and Tyr203. Tyr205 serves as a coordination point for brevianamide F. Dimethylallyl diphosphate is bound by residues Lys294, Tyr296, Gln380, Tyr382, Tyr446, and Tyr450.

This sequence belongs to the tryptophan dimethylallyltransferase family.

It catalyses the reaction brevianamide F + dimethylallyl diphosphate = tryprostatin B + diphosphate. Its pathway is mycotoxin biosynthesis. In terms of biological role, brevianamide F prenyltransferase; part of the gene cluster that mediates the biosynthesis of fumitremorgins, indole alkaloids that carry not only intriguing chemical structures, but also interesting biological and pharmacological activities. The biosynthesis of fumitremorgin-type alkaloids begins by condensation of the two amino acids L-tryptophan and L-proline to brevianamide F, catalyzed by the non-ribosomal peptide synthetase ftmA. Brevianamide F is then prenylated by the prenyltransferase ftmPT1/ftmB in the presence of dimethylallyl diphosphate, resulting in the formation of tryprostatin B. The three cytochrome P450 monooxygenases, ftmP450-1/ftmC, ftmP450-2/ftmE and ftmP450-3/FtmG, are responsible for the conversion of tryprostatin B to 6-hydroxytryprostatin B, tryprostatin A to fumitremorgin C and fumitremorgin C to 12,13-dihydroxyfumitremorgin C, respectively. The putative methyltransferase ftmMT/ftmD is expected for the conversion of 6-hydroxytryprostatin B to tryprostatin A. FtmPT2/FtmH catalyzes the prenylation of 12,13-dihydroxyfumitre-morgin C in the presence of dimethylallyl diphosphate, resulting in the formation of fumitremorgin B. Fumitremorgin B is further converted to verruculogen by ftmOx1/ftmF via the insertion of an endoperoxide bond between the two prenyl moieties. In some fungal species, verruculogen is further converted to fumitremorgin A, but the enzymes involved in this step have not been identified yet. This is Tryprostatin B synthase from Aspergillus fumigatus (Neosartorya fumigata).